A 258-amino-acid polypeptide reads, in one-letter code: Ribosomal RNA large subunit methyltransferase E (258 aa).

S-adenosyl-L-methionine is bound by residues Gly58, Trp60, Asp78, Asp96, and Asp120. Lys160 functions as the Proton acceptor in the catalytic mechanism.

The protein belongs to the class I-like SAM-binding methyltransferase superfamily. RNA methyltransferase RlmE family.

The protein localises to the cytoplasm. The enzyme catalyses uridine(2552) in 23S rRNA + S-adenosyl-L-methionine = 2'-O-methyluridine(2552) in 23S rRNA + S-adenosyl-L-homocysteine + H(+). Its function is as follows. Specifically methylates the uridine in position 2552 of 23S rRNA at the 2'-O position of the ribose in the fully assembled 50S ribosomal subunit. The polypeptide is Ribosomal RNA large subunit methyltransferase E (Methanococcus maripaludis (strain C5 / ATCC BAA-1333)).